The following is a 77-amino-acid chain: Secapin-2 (77 aa).

Residues 1 to 32 (MKNYSKNATYLITVLLFSFVTMLLIIPSKCEA) form the signal peptide. Residues 33–52 (VSNDMQPLEARTADLVQQPR) constitute a propeptide that is removed on maturation. C61 and C72 are disulfide-bonded. Position 77 is a proline amide (P77).

The protein belongs to the secapin family. In terms of tissue distribution, expressed by the venom gland.

The protein localises to the secreted. Serine protease inhibitor which exhibits antifibrinolytic, antielastolytic and antimicrobial activities. Displays antimicrobial activity against bacteria and fungi. Likely functions in the innate immune response to microbial infection and possibly in the venom, as an antifibrinolytic agent. Induces hyperalgesia and edema mediated by leukotrienes when injected into mice. Does not induce hemolytic activity, mast cell degranulation, or chemotactic activity for polymorphonucleated leukocytes (PMNL). This is Secapin-2 from Apis mellifera (Honeybee).